The primary structure comprises 489 residues: Probable cytosol aminopeptidase (489 aa).

Residues Lys260 and Asp265 each coordinate Mn(2+). The active site involves Lys272. Residues Asp283, Asp342, and Glu344 each coordinate Mn(2+). Arg346 is an active-site residue.

The protein belongs to the peptidase M17 family. Mn(2+) serves as cofactor.

It localises to the cytoplasm. The catalysed reaction is Release of an N-terminal amino acid, Xaa-|-Yaa-, in which Xaa is preferably Leu, but may be other amino acids including Pro although not Arg or Lys, and Yaa may be Pro. Amino acid amides and methyl esters are also readily hydrolyzed, but rates on arylamides are exceedingly low.. It catalyses the reaction Release of an N-terminal amino acid, preferentially leucine, but not glutamic or aspartic acids.. Functionally, presumably involved in the processing and regular turnover of intracellular proteins. Catalyzes the removal of unsubstituted N-terminal amino acids from various peptides. The chain is Probable cytosol aminopeptidase from Alcanivorax borkumensis (strain ATCC 700651 / DSM 11573 / NCIMB 13689 / SK2).